We begin with the raw amino-acid sequence, 324 residues long: MLEQVILFTIIMGFLISVLLSPIFIPFLRRLKFGQSIREEGPKSHQKKSGTPTMGGVMIILSIIATTIVMTMKFSEVSMNMILLLFVTVGYGLLGFLDDYIKVVMKRNLGLTSKQKLIGQIVIALVFYAVYHFQGMPTDIRIPGTELSFDFGWIYPVLVIFMLVGGSNAVNLTDGLDGLLSGTAAIAFGAFAILAWNQSQYDVAIFAVAVVGAVLGFLVFNAHPAKVFMGDTGSLALGGAIVTIAILTKLEILLVIIGGVFVIETLSVILQVISFKTTGKRIFKMSPLHHHYELVGWSEWRVVVTFWTAGLLLAVLGIYIEVWL.

A run of 10 helical transmembrane segments spans residues 5–25, 52–72, 77–97, 117–137, 147–167, 176–196, 203–223, 227–247, 250–270, and 302–322; these read VILFTIIMGFLISVLLSPIFI, PTMGGVMIILSIIATTIVMTM, VSMNMILLLFVTVGYGLLGFL, LIGQIVIALVFYAVYHFQGMP, LSFDFGWIYPVLVIFMLVGGS, LDGLLSGTAAIAFGAFAILAW, VAIFAVAVVGAVLGFLVFNAH, VFMGDTGSLALGGAIVTIAIL, LEILLVIIGGVFVIETLSVIL, and VVVTFWTAGLLLAVLGIYIEV.

The protein belongs to the glycosyltransferase 4 family. MraY subfamily. Requires Mg(2+) as cofactor.

It localises to the cell membrane. The catalysed reaction is UDP-N-acetyl-alpha-D-muramoyl-L-alanyl-gamma-D-glutamyl-meso-2,6-diaminopimeloyl-D-alanyl-D-alanine + di-trans,octa-cis-undecaprenyl phosphate = di-trans,octa-cis-undecaprenyl diphospho-N-acetyl-alpha-D-muramoyl-L-alanyl-D-glutamyl-meso-2,6-diaminopimeloyl-D-alanyl-D-alanine + UMP. Its pathway is cell wall biogenesis; peptidoglycan biosynthesis. Functionally, catalyzes the initial step of the lipid cycle reactions in the biosynthesis of the cell wall peptidoglycan: transfers peptidoglycan precursor phospho-MurNAc-pentapeptide from UDP-MurNAc-pentapeptide onto the lipid carrier undecaprenyl phosphate, yielding undecaprenyl-pyrophosphoryl-MurNAc-pentapeptide, known as lipid I. The protein is Phospho-N-acetylmuramoyl-pentapeptide-transferase of Bacillus licheniformis (strain ATCC 14580 / DSM 13 / JCM 2505 / CCUG 7422 / NBRC 12200 / NCIMB 9375 / NCTC 10341 / NRRL NRS-1264 / Gibson 46).